The chain runs to 133 residues: Acyl-CoA thioesterase YbgC (133 aa).

D11 is an active-site residue.

This sequence belongs to the 4-hydroxybenzoyl-CoA thioesterase family. Homotetramer. May interact with CagA.

Functionally, thioesterase that may be involved in phospholipid metabolism. Displays acyl-CoA thioesterase activity with lauroyl-CoA (C12:0), myristoyl-CoA (C14:0), palmitoyl-CoA (C16:0), stearoyl-CoA (C18:0) and benzoyl-CoA, catalyzing the hydrolysis of the thioester bond. Has low activity with butyryl-CoA and octanoyl-CoA. The sequence is that of Acyl-CoA thioesterase YbgC (ybgC) from Helicobacter pylori (strain ATCC 700392 / 26695) (Campylobacter pylori).